The chain runs to 345 residues: S-adenosylmethionine:tRNA ribosyltransferase-isomerase (345 aa).

It belongs to the QueA family. Monomer.

The protein resides in the cytoplasm. The catalysed reaction is 7-aminomethyl-7-carbaguanosine(34) in tRNA + S-adenosyl-L-methionine = epoxyqueuosine(34) in tRNA + adenine + L-methionine + 2 H(+). The protein operates within tRNA modification; tRNA-queuosine biosynthesis. In terms of biological role, transfers and isomerizes the ribose moiety from AdoMet to the 7-aminomethyl group of 7-deazaguanine (preQ1-tRNA) to give epoxyqueuosine (oQ-tRNA). This chain is S-adenosylmethionine:tRNA ribosyltransferase-isomerase, found in Helicobacter pylori (strain ATCC 700392 / 26695) (Campylobacter pylori).